Reading from the N-terminus, the 221-residue chain is Pre-rRNA-processing protein SRD1 (221 aa).

A compositionally biased stretch (polar residues) spans 101–110 (SKNRVTSACN). Disordered stretches follow at residues 101–121 (SKNR…QEAN) and 137–161 (ASIT…TILP). Basic residues predominate over residues 142–155 (KYSKKTTSRPKREK). A GATA-type zinc finger spans residues 168-193 (CSKCKDTWTIQWRSGPDQNRELCSPC). Residues 201–221 (LKKENEKKRQAADKRIDRNNP) form a disordered region. Basic and acidic residues predominate over residues 203–221 (KENEKKRQAADKRIDRNNP).

Its subcellular location is the cytoplasm. It is found in the nucleus. In terms of biological role, plays a direct or indirect role in pre-rRNA processing. The sequence is that of Pre-rRNA-processing protein SRD1 (SRD1) from Saccharomyces cerevisiae (strain ATCC 204508 / S288c) (Baker's yeast).